Here is a 505-residue protein sequence, read N- to C-terminus: ATP synthase subunit beta (505 aa).

158 to 165 (GGAGVGKT) is a binding site for ATP.

This sequence belongs to the ATPase alpha/beta chains family. F-type ATPases have 2 components, CF(1) - the catalytic core - and CF(0) - the membrane proton channel. CF(1) has five subunits: alpha(3), beta(3), gamma(1), delta(1), epsilon(1). CF(0) has three main subunits: a(1), b(2) and c(9-12). The alpha and beta chains form an alternating ring which encloses part of the gamma chain. CF(1) is attached to CF(0) by a central stalk formed by the gamma and epsilon chains, while a peripheral stalk is formed by the delta and b chains.

It is found in the cell inner membrane. It carries out the reaction ATP + H2O + 4 H(+)(in) = ADP + phosphate + 5 H(+)(out). Functionally, produces ATP from ADP in the presence of a proton gradient across the membrane. The catalytic sites are hosted primarily by the beta subunits. The chain is ATP synthase subunit beta from Parabacteroides distasonis (strain ATCC 8503 / DSM 20701 / CIP 104284 / JCM 5825 / NCTC 11152).